The sequence spans 378 residues: Septin-5 (378 aa).

Positions 50 to 323 (KGFDFTLMVA…ENYRAHCIQQ (274 aa)) constitute a Septin-type G domain. The tract at residues 60–67 (GESGLGKS) is G1 motif. GTP-binding positions include 60–67 (GESGLGKS), threonine 94, and glycine 120. A G3 motif region spans residues 117 to 120 (DTPG). Residue arginine 177 is modified to Omega-N-methylarginine. Residues 198-201 (AKAD) are G4 motif. 199-207 (KADCLVPSE) is a GTP binding site. At serine 234 the chain carries Phosphoserine. GTP is bound by residues glycine 257 and arginine 272. Residue serine 336 is modified to Phosphoserine. Threonine 345 carries the post-translational modification Phosphothreonine. A coiled-coil region spans residues 347-378 (DAETEKLIRMKDEELRRMQEMLQRMKQQMQDQ).

Belongs to the TRAFAC class TrmE-Era-EngA-EngB-Septin-like GTPase superfamily. Septin GTPase family. In terms of assembly, septins polymerize into heterooligomeric protein complexes that form filaments, and can associate with cellular membranes, actin filaments and microtubules. GTPase activity is required for filament formation. Interacts with SEPTIN2 and SEPTIN5. In platelets, associated with a complex containing STX4. Interacts with PRKN; this interaction leads to SEPTIN5 ubiquitination and degradation. Interacts with DYRK1A. Interacts with STX1A; in the cerebellar cortex. In terms of processing, phosphorylated by DYRK1A.

The protein resides in the cytoplasm. It is found in the cytoskeleton. Its function is as follows. Filament-forming cytoskeletal GTPase. May play a role in cytokinesis (Potential). May play a role in platelet secretion. The chain is Septin-5 from Macaca fascicularis (Crab-eating macaque).